The primary structure comprises 381 residues: Pentatricopeptide repeat-containing protein 2, mitochondrial (381 aa).

A PPR repeat occupies 159 to 193; sequence TSFNILMDMLFTKGKYERALQVLIEMKNQDVRFSK. At Ser375 the chain carries Phosphoserine.

It belongs to the PTCD2 family. High expression in heart and liver and low expression in kidney, brain and testis.

The protein resides in the mitochondrion. Involved in mitochondrial RNA maturation and mitochondrial respiratory chain function. This chain is Pentatricopeptide repeat-containing protein 2, mitochondrial (Ptcd2), found in Mus musculus (Mouse).